A 277-amino-acid polypeptide reads, in one-letter code: Mitochondrial outer membrane protein porin 5 (277 aa).

Belongs to the eukaryotic mitochondrial porin (TC 1.B.8.1) family.

It is found in the mitochondrion outer membrane. Functionally, forms a channel through the mitochondrial outer membrane that allows diffusion of small hydrophilic molecules. The channel adopts an open conformation at low or zero membrane potential and a closed conformation at potentials above 30-40 mV. The open state has a weak anion selectivity whereas the closed state is cation-selective. This Oryza sativa subsp. japonica (Rice) protein is Mitochondrial outer membrane protein porin 5 (VDAC5).